The primary structure comprises 179 residues: Acireductone dioxygenase (179 aa).

A disordered region spans residues 7 to 26 (MDDAPGDPRQPHRPDPGRPV). 4 residues coordinate Fe(2+): histidine 88, histidine 90, glutamate 94, and histidine 133. Positions 88, 90, 94, and 133 each coordinate Ni(2+).

It belongs to the acireductone dioxygenase (ARD) family. In terms of assembly, monomer. Interacts with MMP14. Fe(2+) is required as a cofactor. Ni(2+) serves as cofactor. In terms of tissue distribution, detected in heart, colon, lung, stomach, brain, spleen, liver, skeletal muscle and kidney.

The protein localises to the cytoplasm. Its subcellular location is the nucleus. The protein resides in the cell membrane. The catalysed reaction is 1,2-dihydroxy-5-(methylsulfanyl)pent-1-en-3-one + O2 = 4-methylsulfanyl-2-oxobutanoate + formate + 2 H(+). It carries out the reaction 1,2-dihydroxy-5-(methylsulfanyl)pent-1-en-3-one + O2 = 3-(methylsulfanyl)propanoate + CO + formate + 2 H(+). The protein operates within amino-acid biosynthesis; L-methionine biosynthesis via salvage pathway; L-methionine from S-methyl-5-thio-alpha-D-ribose 1-phosphate: step 5/6. Functionally, catalyzes 2 different reactions between oxygen and the acireductone 1,2-dihydroxy-3-keto-5-methylthiopentene (DHK-MTPene) depending upon the metal bound in the active site. Fe-containing acireductone dioxygenase (Fe-ARD) produces formate and 2-keto-4-methylthiobutyrate (KMTB), the alpha-ketoacid precursor of methionine in the methionine recycle pathway. Ni-containing acireductone dioxygenase (Ni-ARD) produces methylthiopropionate, carbon monoxide and formate, and does not lie on the methionine recycle pathway. Also down-regulates cell migration mediated by MMP14. Necessary for hepatitis C virus replication in an otherwise non-permissive cell line. This is Acireductone dioxygenase from Homo sapiens (Human).